The chain runs to 709 residues: Elongation factor G (709 aa).

The tr-type G domain occupies 8–297; that stretch reads ANTRNIGIMA…AVIDYLPSPL (290 aa). GTP contacts are provided by residues 17 to 24, 81 to 85, and 135 to 138; these read AHVDAGKT, DTPGH, and NKMD.

This sequence belongs to the TRAFAC class translation factor GTPase superfamily. Classic translation factor GTPase family. EF-G/EF-2 subfamily.

Its subcellular location is the cytoplasm. Functionally, catalyzes the GTP-dependent ribosomal translocation step during translation elongation. During this step, the ribosome changes from the pre-translocational (PRE) to the post-translocational (POST) state as the newly formed A-site-bound peptidyl-tRNA and P-site-bound deacylated tRNA move to the P and E sites, respectively. Catalyzes the coordinated movement of the two tRNA molecules, the mRNA and conformational changes in the ribosome. This chain is Elongation factor G, found in Lactococcus lactis subsp. lactis (strain IL1403) (Streptococcus lactis).